We begin with the raw amino-acid sequence, 617 residues long: MLLGKFLLVASFILPIAYTWTGATIRNHPADVVAARNKITSRSVARSEPTNSYIRPCYFTNWAQYRQGRAKFVPEDYTPGLCTHILFAFGWMNADYTVRAYDPADLPNDWAGEGMYRRVNKLKVTDTQLKTLLSFGGWSFGTALFQGMAASSASRKVFIDSAITFVRTWGFDGIDIDWEYPSGATDMANYVALVKELKAACESEAGSTGKDRLLVTAAVAAGPATIDAGYDIPNLAPNFDFILLMSYDFFGAWASLVGFNSPLYATTELPAEWNGWNVDSSARYWNQKGMPKEKIIVGMPTYGRGWTLNNASAINPGTSGSPAKITQYVQEAGVGAYFEFCEMLANGATRYWDSQSQVPYLVQGNQWWSYDDEESFANKMAYVKREGYGGAFVWTLDFDDFNAGCSNSNGQLYPLISVIAKELGGVIIPKKGGVTTAPTTVATTVTTGRPPMTSAVTTTTAATTTTTRAATTTTASNTNVCSGKSDGFYPNSNNCGLFVLCLSSKSYSMSCPSGLQYSASLKYCTTSTASGCSVTTTRAPTTTTKSAPTVTTTTRAPTTTTPAFKCTKDGFFGVPSDCLKFIRCVNGISYNFECPNGLSFHADTMMCDRPDPSKCAK.

Residues 53 to 426 form the GH18 domain; the sequence is YIRPCYFTNW…SVIAKELGGV (374 aa). Cys-57 and Cys-82 form a disulfide bridge. Chitin is bound by residues 109-110 and 136-139; these read DW and GGWS. The active-site Proton donor is Glu-179. Residues Tyr-180 and 245–248 contribute to the chitin site; that span reads MSYD. Asn-310 is a glycosylation site (N-linked (GlcNAc...) asparagine). Residue Trp-394 participates in chitin binding. 2 consecutive Chitin-binding type-2 domains span residues 478 to 534 and 563 to 617; these read TNVC…GCSV and AFKC…KCAK. Cystine bridges form between Cys-511–Cys-524 and Cys-594–Cys-607.

Belongs to the glycosyl hydrolase 18 family. Chitinase class II subfamily.

It catalyses the reaction Random endo-hydrolysis of N-acetyl-beta-D-glucosaminide (1-&gt;4)-beta-linkages in chitin and chitodextrins.. This Caenorhabditis elegans protein is Probable endochitinase (cht-1).